Here is a 437-residue protein sequence, read N- to C-terminus: Branched-chain amino acid transport system 2 carrier protein (437 aa).

12 helical membrane passes run 9 to 29, 43 to 63, 80 to 100, 117 to 137, 149 to 169, 192 to 212, 228 to 248, 280 to 300, 308 to 328, 335 to 355, 369 to 389, and 404 to 424; these read LLALGFMTFALFLGAGNIIFP, AAFGFLLTGVGLPLLTVVALA, AGVAFAIAVYLAIGPLFATPR, GGVPLLIYTVAYFSVVLFLVL, VITPVLLSALLVLGGAAIFAP, GYLTMDTLGALVFGIVIATAI, MIAGVIAATGLSLVYLALFYL, LLLAVVITLACLTTAVGLITA, LLPVSYKTVVIVFSLFSLLVA, LISLSVPVLVGLYPLAIVLIA, VFVPVMIVALLFGIVDGLGAA, and LADQSLGWLLPVSIALVLAVV.

Belongs to the branched chain amino acid transporter family.

The protein localises to the cell inner membrane. Component of the LIV-II transport system for branched-chain amino acids. BraB is specific for isoleucine, leucine and valine. The LIV-II transport system is coupled to sodium and lithium ions. The sequence is that of Branched-chain amino acid transport system 2 carrier protein (braB) from Pseudomonas aeruginosa (strain ATCC 15692 / DSM 22644 / CIP 104116 / JCM 14847 / LMG 12228 / 1C / PRS 101 / PAO1).